The sequence spans 529 residues: Phospholipase A1-Igamma2, chloroplastic (529 aa).

A chloroplast-targeting transit peptide spans 1–43 (MAAIPSHNNLLTINHKNSITGSSSLNTNFSEINFPAKFRVATR). A GXSXG motif is present at residues 316 to 320 (GHSLG). S318 functions as the Acyl-ester intermediate in the catalytic mechanism. Catalysis depends on charge relay system residues D381 and H437.

This sequence belongs to the AB hydrolase superfamily. Lipase family. Interacts with SBP1. Widely expressed. Highly expressed in leaves and stems.

Its subcellular location is the plastid. The protein resides in the chloroplast. It carries out the reaction 1,2-dihexadecanoyl-sn-glycero-3-phosphocholine + H2O = 2-hexadecanoyl-sn-glycero-3-phosphocholine + hexadecanoate + H(+). It catalyses the reaction a 1,2-diacyl-3-O-(beta-D-galactosyl)-sn-glycerol + H2O = an acyl-3-O-(beta-D-galactosyl)-sn-glycerol + a fatty acid + H(+). The catalysed reaction is a 1,2-diacyl-3-O-[alpha-D-galactosyl-(1-&gt;6)-beta-D-galactosyl]-sn-glycerol + H2O = acyl-3-O-[alpha-D-galactosyl-(1-&gt;6)-beta-D-galactosyl]-sn-glycerol + a fatty acid + H(+). The enzyme catalyses a triacylglycerol + H2O = a diacylglycerol + a fatty acid + H(+). Acylhydrolase with broad specificity. Catalyzes the hydrolysis of phosphatidylcholine at the sn-1 position. Possesses moderate activity toward phosphatidylcholine (PC), monogalactosyldiacylglycerol (MGDG), digalactosyldiacylglycerol (DGDG) and triacylglycerol (TAG). This chain is Phospholipase A1-Igamma2, chloroplastic, found in Arabidopsis thaliana (Mouse-ear cress).